We begin with the raw amino-acid sequence, 471 residues long: NADH-quinone oxidoreductase subunit N 1 (471 aa).

14 consecutive transmembrane segments (helical) span residues 11-31, 39-59, 81-101, 105-125, 127-147, 162-182, 200-220, 234-254, 270-290, 296-316, 324-344, 365-385, 398-418, and 444-464; these read ALVP…AGAW, TIHV…ALAA, AIVL…VAGH, TEFV…AGAG, LIML…LAGW, LAGA…FGVA, AAAA…AGAV, PPPV…VAFY, LITA…AFAQ, MLGY…AVAG, ALLL…AVVA, ALAL…AVFV, GLAW…FYYL, and AVAL…GIVL.

This sequence belongs to the complex I subunit 2 family. As to quaternary structure, NDH-1 is composed of 14 different subunits. Subunits NuoA, H, J, K, L, M, N constitute the membrane sector of the complex.

The protein localises to the cell membrane. It catalyses the reaction a quinone + NADH + 5 H(+)(in) = a quinol + NAD(+) + 4 H(+)(out). NDH-1 shuttles electrons from NADH, via FMN and iron-sulfur (Fe-S) centers, to quinones in the respiratory chain. The immediate electron acceptor for the enzyme in this species is believed to be a menaquinone. Couples the redox reaction to proton translocation (for every two electrons transferred, four hydrogen ions are translocated across the cytoplasmic membrane), and thus conserves the redox energy in a proton gradient. This is NADH-quinone oxidoreductase subunit N 1 from Streptomyces griseus subsp. griseus (strain JCM 4626 / CBS 651.72 / NBRC 13350 / KCC S-0626 / ISP 5235).